A 407-amino-acid polypeptide reads, in one-letter code: MKSIILFVLSLVLILEKQAAVMGQKDGSKGQLPSGSSQFPHGQKGQHYFGQKDQQHTKSKGSFSIQHTYHVDINDHDQTRKSQQYDLNALHKVTKSKQHLDGSQQLLNYKQEGRDHDKSEGHFHMIVIHHKGGQAHCGTQNPSQDQGNSPSGKGLSSQYSNTEKRLWVHGLSKEQASASGAQKGRTQGGSQSSYVLQTEELVVNKQQLETKNSHQNKGHYQNVVDVREEHSGKLQTSLHPAHQDRLQHGPKDIFTTQDELLVYNKNQHQTKNLNQDQEHGQKAHKISYQSSRTEERQLNHGEKSVQKDVSKGSISIQTEEKIHGKSQNQVTIHSQDQEHGHKENKMSYQSSSTEERHLNCGEKGIQKGVSKGSISIQTEEQIHGKSQNXVRIPSQAQEYGRKENKIS.

Positions 1-23 are cleaved as a signal peptide; sequence MKSIILFVLSLVLILEKQAAVMG. Disordered stretches follow at residues 25-60, 133-158, 173-192, and 272-407; these read KDGSKGQLPSGSSQFPHGQKGQHYFGQKDQQHTKSK, GQAHCGTQNPSQDQGNSPSGKGLSSQ, KEQASASGAQKGRTQGGSQS, and NLNQ…NKIS. Composition is skewed to polar residues over residues 31-40, 137-158, and 174-192; these read QLPSGSSQFP, CGTQNPSQDQGNSPSGKGLSSQ, and EQASASGAQKGRTQGGSQS. Residues 292–310 are compositionally biased toward basic and acidic residues; that stretch reads RTEERQLNHGEKSVQKDVS. Residues 325–334 show a composition bias toward polar residues; it reads KSQNQVTIHS. Basic and acidic residues predominate over residues 335-345; it reads QDQEHGHKENK. Residues 372–397 show a composition bias toward polar residues; that stretch reads GSISIQTEEQIHGKSQNXVRIPSQAQ.

This sequence belongs to the semenogelin family. Interacts with SERPINA5.

It localises to the secreted. Participates in the formation of a gel matrix (sperm coagulum) entrapping the accessory gland secretions and ejaculated spermatozoa. This chain is Semenogelin-2 (SEMG2), found in Pan troglodytes (Chimpanzee).